The primary structure comprises 320 residues: Reticulocalbin-2 (320 aa).

Positions 1–25 (MRLGPRPAALGLLLPLLLYAAVAGA) are cleaved as a signal peptide. 2 EF-hand domains span residues 64–99 (EQQRRLQSIIKKIDSDSDGFLTENELSQWIQMSFKH) and 100–135 (YAMQEAKQQFVEYDKNSDGAVTWDEYNIQMYDRVID). Ca(2+) contacts are provided by aspartate 77, aspartate 79, aspartate 81, glutamate 88, aspartate 113, asparagine 115, aspartate 117, and glutamate 124. Residue threonine 140 is modified to Phosphothreonine. 4 consecutive EF-hand domains span residues 150–185 (FRQLHLKDKKRFEKANQDSGPGLSLEEFIAFEHPEE), 189–224 (MTEFVIQEALEEHDKNGDGFVSLEEFLGDYRRDPTA), 230–265 (WILVEKDRFVNDYDKDNDGRLDPQELLSWVVPNNQG), and 266–301 (IAQEEALHLIDEMDLNSDKKLSEEEILENQDLFLTS). Residues aspartate 167, glutamate 176, aspartate 202, asparagine 204, aspartate 206, glutamate 213, aspartate 243, aspartate 245, aspartate 247, arginine 249, glutamate 254, aspartate 279, asparagine 281, aspartate 283, lysine 285, and glutamate 290 each coordinate Ca(2+). The Prevents secretion from ER signature appears at 317–320 (HDEL).

It belongs to the CREC family.

It is found in the endoplasmic reticulum lumen. Its function is as follows. Not known. Binds calcium. The sequence is that of Reticulocalbin-2 (Rcn2) from Mus musculus (Mouse).